The primary structure comprises 323 residues: Fructose-1,6-bisphosphatase class 1 (323 aa).

Mg(2+)-binding residues include Glu-88, Asp-107, Leu-109, and Asp-110. Residues 110–113 (DGSS) and Asn-200 contribute to the substrate site. Glu-272 is a binding site for Mg(2+).

This sequence belongs to the FBPase class 1 family. Homotetramer. Requires Mg(2+) as cofactor.

Its subcellular location is the cytoplasm. The enzyme catalyses beta-D-fructose 1,6-bisphosphate + H2O = beta-D-fructose 6-phosphate + phosphate. Its pathway is carbohydrate biosynthesis; gluconeogenesis. The chain is Fructose-1,6-bisphosphatase class 1 from Acinetobacter baumannii (strain ACICU).